We begin with the raw amino-acid sequence, 548 residues long: Chaperonin GroEL (548 aa).

Residues 30 to 33 (TLGP), Lys51, 87 to 91 (DGTTT), Gly415, 479 to 481 (NAA), and Asp495 contribute to the ATP site. The segment at 524–548 (LPKEDKSSDSSSSPAGGMGGMGGMM) is disordered. Over residues 539–548 (GGMGGMGGMM) the composition is skewed to gly residues.

Belongs to the chaperonin (HSP60) family. Forms a cylinder of 14 subunits composed of two heptameric rings stacked back-to-back. Interacts with the co-chaperonin GroES.

The protein resides in the cytoplasm. The enzyme catalyses ATP + H2O + a folded polypeptide = ADP + phosphate + an unfolded polypeptide.. Functionally, together with its co-chaperonin GroES, plays an essential role in assisting protein folding. The GroEL-GroES system forms a nano-cage that allows encapsulation of the non-native substrate proteins and provides a physical environment optimized to promote and accelerate protein folding. This is Chaperonin GroEL from Buchnera aphidicola subsp. Acyrthosiphon pisum (strain 5A).